The sequence spans 340 residues: Ketol-acid reductoisomerase (NADP(+)) (340 aa).

The KARI N-terminal Rossmann domain maps to 1–183 (MAITVYYDKD…GGGRTGIIET (183 aa)). NADP(+) contacts are provided by residues 26 to 29 (FGSQ), Arg49, Ser52, Ser54, and 84 to 87 (DEIQ). His109 is a catalytic residue. Gly135 serves as a coordination point for NADP(+). The KARI C-terminal knotted domain occupies 184–329 (TFKAETETDL…RNLRAMMPWI (146 aa)). Asp192, Glu196, Glu228, and Glu232 together coordinate Mg(2+). Ser253 provides a ligand contact to substrate.

This sequence belongs to the ketol-acid reductoisomerase family. Mg(2+) serves as cofactor.

It carries out the reaction (2R)-2,3-dihydroxy-3-methylbutanoate + NADP(+) = (2S)-2-acetolactate + NADPH + H(+). The enzyme catalyses (2R,3R)-2,3-dihydroxy-3-methylpentanoate + NADP(+) = (S)-2-ethyl-2-hydroxy-3-oxobutanoate + NADPH + H(+). It functions in the pathway amino-acid biosynthesis; L-isoleucine biosynthesis; L-isoleucine from 2-oxobutanoate: step 2/4. It participates in amino-acid biosynthesis; L-valine biosynthesis; L-valine from pyruvate: step 2/4. Involved in the biosynthesis of branched-chain amino acids (BCAA). Catalyzes an alkyl-migration followed by a ketol-acid reduction of (S)-2-acetolactate (S2AL) to yield (R)-2,3-dihydroxy-isovalerate. In the isomerase reaction, S2AL is rearranged via a Mg-dependent methyl migration to produce 3-hydroxy-3-methyl-2-ketobutyrate (HMKB). In the reductase reaction, this 2-ketoacid undergoes a metal-dependent reduction by NADPH to yield (R)-2,3-dihydroxy-isovalerate. The protein is Ketol-acid reductoisomerase (NADP(+)) of Campylobacter jejuni subsp. jejuni serotype O:2 (strain ATCC 700819 / NCTC 11168).